A 441-amino-acid chain; its full sequence is Ribulose bisphosphate carboxylase large chain (441 aa).

Substrate contacts are provided by asparagine 89 and threonine 139. The active-site Proton acceptor is lysine 141. Lysine 143 is a binding site for substrate. Mg(2+)-binding residues include lysine 167, aspartate 169, and glutamate 170. Position 167 is an N6-carboxylysine (lysine 167). Histidine 260 serves as the catalytic Proton acceptor. Substrate contacts are provided by residue 261, histidine 293, and serine 345.

Belongs to the RuBisCO large chain family. Type I subfamily. In terms of assembly, heterohexadecamer of 8 large chains and 8 small chains; disulfide-linked. The disulfide link is formed within the large subunit homodimers. It depends on Mg(2+) as a cofactor. In terms of processing, the disulfide bond which can form in the large chain dimeric partners within the hexadecamer appears to be associated with oxidative stress and protein turnover.

The protein resides in the plastid. It is found in the chloroplast. The enzyme catalyses 2 (2R)-3-phosphoglycerate + 2 H(+) = D-ribulose 1,5-bisphosphate + CO2 + H2O. It carries out the reaction D-ribulose 1,5-bisphosphate + O2 = 2-phosphoglycolate + (2R)-3-phosphoglycerate + 2 H(+). In terms of biological role, ruBisCO catalyzes two reactions: the carboxylation of D-ribulose 1,5-bisphosphate, the primary event in carbon dioxide fixation, as well as the oxidative fragmentation of the pentose substrate in the photorespiration process. Both reactions occur simultaneously and in competition at the same active site. The chain is Ribulose bisphosphate carboxylase large chain from Apocynum cannabinum (Hemp dogbane).